The following is a 68-amino-acid chain: Alpha-conotoxin-like Mr1.2 (68 aa).

Residues 1–21 (MGMRMMFTVFLLVVLATTVVS) form the signal peptide. Residues 22–48 (FTSDRGSDGRNAAAKDKASDLVALTVK) constitute a propeptide that is removed on maturation. Cystine bridges form between Cys-50–Cys-56 and Cys-51–Cys-64. Residues 52 to 54 (SNP) are ser-Xaa-Pro motif, crucial for potent interaction with nAChR. The residue at position 65 (Asn-65) is an Asparagine amide.

It belongs to the conotoxin A superfamily. Expressed by the venom duct.

It localises to the secreted. Alpha-conotoxins act on postsynaptic membranes, they bind to the nicotinic acetylcholine receptors (nAChR) and thus inhibit them. The chain is Alpha-conotoxin-like Mr1.2 from Conus marmoreus (Marble cone).